The sequence spans 93 residues: Small ribosomal subunit protein uS19 (93 aa).

Belongs to the universal ribosomal protein uS19 family.

Its function is as follows. Protein S19 forms a complex with S13 that binds strongly to the 16S ribosomal RNA. In Nitratidesulfovibrio vulgaris (strain ATCC 29579 / DSM 644 / CCUG 34227 / NCIMB 8303 / VKM B-1760 / Hildenborough) (Desulfovibrio vulgaris), this protein is Small ribosomal subunit protein uS19.